Consider the following 422-residue polypeptide: Histidine--tRNA ligase (422 aa).

This sequence belongs to the class-II aminoacyl-tRNA synthetase family. Homodimer.

It is found in the cytoplasm. It catalyses the reaction tRNA(His) + L-histidine + ATP = L-histidyl-tRNA(His) + AMP + diphosphate + H(+). This is Histidine--tRNA ligase from Lysinibacillus sphaericus (strain C3-41).